Consider the following 766-residue polypeptide: 5-methyltetrahydropteroyltriglutamate--homocysteine methyltransferase 1 (766 aa).

Residues lysine 18 and asparagine 116 each coordinate 5-methyltetrahydropteroyltri-L-glutamate. L-homocysteine-binding positions include 438–440 and glutamate 491; that span reads IGS. Residues 438–440 and glutamate 491 contribute to the L-methionine site; that span reads IGS. 5-methyltetrahydropteroyltri-L-glutamate is bound by residues aspartate 496, tyrosine 519, 522–523, and tryptophan 568; that span reads RC. Position 606 (aspartate 606) interacts with L-homocysteine. Aspartate 606 is a binding site for L-methionine. Residues histidine 648, cysteine 650, histidine 659, and glutamate 672 each contribute to the Zn(2+) site. The active-site Proton donor is the histidine 702. Residue cysteine 734 participates in Zn(2+) binding.

Belongs to the vitamin-B12 independent methionine synthase family. Requires Zn(2+) as cofactor.

It is found in the cytoplasm. Its subcellular location is the cytosol. The enzyme catalyses 5-methyltetrahydropteroyltri-L-glutamate + L-homocysteine = tetrahydropteroyltri-L-glutamate + L-methionine. It participates in amino-acid biosynthesis; L-methionine biosynthesis via de novo pathway; L-methionine from L-homocysteine (MetE route): step 1/1. In terms of biological role, catalyzes the transfer of a methyl group from 5-methyltetrahydrofolate to homocysteine resulting in methionine formation. The polypeptide is 5-methyltetrahydropteroyltriglutamate--homocysteine methyltransferase 1 (Oryza sativa subsp. japonica (Rice)).